The following is a 2643-amino-acid chain: Ankyrin repeat domain-containing protein 11 (2643 aa).

Disordered stretches follow at residues 1–90 (MPKG…KEPV) and 128–170 (SANS…RGET). 2 stretches are compositionally biased toward basic and acidic residues: residues 21 to 54 (MVEK…VRER) and 69 to 90 (EQKD…KEPV). The span at 128 to 155 (SANSPVDTTPKHPSQSTVCQKGTPNSAS) shows a compositional bias: polar residues. Over residues 156–170 (KTKDKVNKRNERGET) the composition is skewed to basic and acidic residues. ANK repeat units lie at residues 167–196 (RGET…DVNV), 200–229 (AGWT…EVNT), 233–262 (DDDT…NPQQ), and 266–292 (KGET…YTSS). At Ser276 the chain carries Phosphoserine. Residues 289–365 (YTSSEESSTE…DRVPPVDDKH (77 aa)) are disordered. A compositionally biased stretch (acidic residues) spans 295 to 305 (SSTESSEEEDA). The span at 309–320 (APSSSVDGNNTD) shows a compositional bias: polar residues. 2 stretches are compositionally biased toward basic and acidic residues: residues 322–335 (EFEK…KNPE) and 356–365 (DRVPPVDDKH). Ser408 carries the phosphoserine modification. Residue Thr410 is modified to Phosphothreonine. Position 411 is a phosphoserine (Ser411). 3 disordered regions span residues 423-504 (GEKL…CLKG), 517-651 (SLSA…GQCS), and 727-805 (DANK…DKEK). Residues 438–451 (KARESSSSRQQKEK) are compositionally biased toward basic and acidic residues. Residues 452–462 (NKLKKKRKKET) show a composition bias toward basic residues. Residues 463-475 (KGKEVRFGKRSDK) are compositionally biased toward basic and acidic residues. Residues 484–494 (ESSESEEDDGD) are compositionally biased toward acidic residues. Over residues 517–528 (SLSASSTSSHGS) the composition is skewed to low complexity. The segment covering 537–550 (GHTDQHTKHWRTDN) has biased composition (basic and acidic residues). Polar residues predominate over residues 557-574 (PAWSEVSSLSDSSRTGLT). Low complexity predominate over residues 575–588 (SESDCSSEGSSVES). Composition is skewed to basic residues over residues 591-602 (PTRRKQEHRKRG) and 633-646 (VKKH…KHKE). Ser838 is subject to Phosphoserine. Composition is skewed to basic and acidic residues over residues 918–931 (KNSE…EKHK) and 938–962 (SEKD…IRSE). Disordered stretches follow at residues 918-962 (KNSE…IRSE), 977-1037 (SFKD…STLD), and 1051-1074 (EKKD…FDQL). Position 1070 is a phosphoserine (Ser1070). Phosphothreonine is present on Thr1111. At Ser1114 the chain carries Phosphoserine. Disordered regions lie at residues 1114–1388 (SEDE…KDAS) and 1420–1711 (LFSS…TPSC). Basic and acidic residues-rich tracts occupy residues 1133-1297 (DTQR…DKIS), 1326-1343 (AEDK…LREK), 1355-1388 (KSHE…KDAS), 1420-1444 (LFSS…KELK), 1464-1535 (RERW…KGDS), 1546-1564 (VPSR…KLLG), 1577-1587 (LSQKDLEIEER), and 1595-1640 (MKQM…KVKE). The residue at position 1676 (Ser1676) is a Phosphoserine. Over residues 1678–1695 (RTEQSRPTGVPTPTSVVS) the composition is skewed to polar residues. Ser1777 and Ser1832 each carry phosphoserine. Phosphotyrosine is present on residues Tyr1835 and Tyr1836. A phosphoserine mark is found at Ser1837 and Ser1844. 3 disordered regions span residues 1863-1900 (PPDS…GLPL), 1981-2027 (SPKH…EVKD), and 2111-2386 (HEAF…STQQ). Ser1981 and Ser2139 each carry phosphoserine. 2 stretches are compositionally biased toward pro residues: residues 2150–2160 (PVPPAESPPGP) and 2175–2184 (EEPPAPPPQE). The segment covering 2273–2284 (SAEASCVVAAAE) has biased composition (low complexity). Positions 2297-2315 (PEPKPTSEVPKAPKVEEVP) are enriched in basic and acidic residues. Residues 2349 to 2643 (AKGRASEEED…VNDDFVLLPA (295 aa)) form an important for protein degradation region. Over residues 2371-2386 (RSSQQLQQQLNTSTQQ) the composition is skewed to low complexity.

Interacts with the PAS region of the p160 coactivators. In terms of processing, subject to proteasomal degradation which is probably essential to regulate its activity.

The protein localises to the nucleus. Chromatin regulator which modulates histone acetylation and gene expression in neural precursor cells. May recruit histone deacetylases (HDACs) to the p160 coactivators/nuclear receptor complex to inhibit ligand-dependent transactivation. Has a role in proliferation and development of cortical neural precursors. May also regulate bone homeostasis. This chain is Ankyrin repeat domain-containing protein 11, found in Mus musculus (Mouse).